The chain runs to 155 residues: Antitoxin HicB 1 (155 aa).

The 55-residue stretch at 99-153 (MLNAFLDSKLTQIELANRMGVKKQEVTRIFDLRHSTKIDTVGKVASAIGHQLTLS) folds into the HTH cro/C1-type domain. The H-T-H motif DNA-binding region spans 110–129 (QIELANRMGVKKQEVTRIFD).

It belongs to the HicB antitoxin family. Probably forms a complex with the probable mRNA interferase HicA1 (its cognate toxin); when complexed with HicA 1 inhibits the toxin activity.

Functionally, antitoxin component of a type II toxin-antitoxin (TA) system. Functions as an mRNA interferase antitoxin preventing effects of the HicA 1 toxin. The chain is Antitoxin HicB 1 (hicB1) from Photorhabdus laumondii subsp. laumondii (strain DSM 15139 / CIP 105565 / TT01) (Photorhabdus luminescens subsp. laumondii).